Reading from the N-terminus, the 981-residue chain is Lateral signaling target protein 2 homolog (981 aa).

The segment at 308-462 (PLGSSSIEAP…LESSDDDTDE (155 aa)) is disordered. Composition is skewed to low complexity over residues 326–356 (TTSSSQNNNNSSNNNHSSSSTTTTTMGTTNT), 369–380 (NNHNSNSNSSTN), 390–404 (SPSMLSLSATSTPTA), and 412–433 (PSHSIDSTSSAATSSTNPPADW). Residues 434 to 462 (SDGDDEDEDDDDIEVDEEDLESSDDDTDE) show a composition bias toward acidic residues. Ser-544 and Ser-545 each carry phosphoserine. Disordered regions lie at residues 561–642 (EQMQ…SSLS) and 749–897 (DNVF…SPPA). Residues 576 to 611 (HSHRHHQRHHHHHHHRHSHQHRQPHPHRTTRSGRKR) show a composition bias toward basic residues. Low complexity predominate over residues 630 to 642 (LASGDTSAASSLS). Positions 760–791 (ATGQRHSAGASMQRNNTIDLASQSGEGSPSGA) are enriched in polar residues. Ser-805 carries the phosphoserine modification. Composition is skewed to low complexity over residues 811 to 866 (AASS…PVSA) and 883 to 896 (PSSATSTSATLSPP). An FYVE-type zinc finger spans residues 901–961 (DGKAPRCMAC…VCRDCYVREV (61 aa)). The Zn(2+) site is built by Cys-907, Cys-910, Cys-923, Cys-926, Cys-931, Cys-934, Cys-953, and Cys-956.

This sequence belongs to the lst-2 family.

Functionally, negative regulator of epidermal growth factor receptor (EGFR) signaling. The chain is Lateral signaling target protein 2 homolog from Drosophila erecta (Fruit fly).